The chain runs to 621 residues: 2-hydroxyacyl-CoA lyase 2 (621 aa).

The helical transmembrane segment at 7–29 (LGCSLGAALGGVIFASYKLGLLY) threads the bilayer. Position 87 (Glu-87) interacts with thiamine diphosphate. A thiamine pyrophosphate binding region spans residues 459–539 (DFVGSAAYIM…VIALVGNDAC (81 aa)). Mg(2+) contacts are provided by Asp-510 and Asn-536.

Belongs to the TPP enzyme family. Mg(2+) serves as cofactor. Requires thiamine diphosphate as cofactor.

Its subcellular location is the endoplasmic reticulum membrane. The catalysed reaction is 2-hydroxyoctadecanoyl-CoA = heptadecanal + formyl-CoA. It catalyses the reaction (2R)-hydroxyhexadecanoyl-CoA = pentadecanal + formyl-CoA. Its function is as follows. Endoplasmic reticulum 2-OH acyl-CoA lyase involved in the cleavage (C1 removal) reaction in the fatty acid alpha-oxydation in a thiamine pyrophosphate (TPP)-dependent manner. The polypeptide is 2-hydroxyacyl-CoA lyase 2 (ilvbl) (Danio rerio (Zebrafish)).